We begin with the raw amino-acid sequence, 158 residues long: Cyclic pyranopterin monophosphate synthase (158 aa).

Substrate contacts are provided by residues 75 to 77 (LCH) and 113 to 114 (ME). Residue Asp-128 is part of the active site.

It belongs to the MoaC family. As to quaternary structure, homohexamer; trimer of dimers.

It carries out the reaction (8S)-3',8-cyclo-7,8-dihydroguanosine 5'-triphosphate = cyclic pyranopterin phosphate + diphosphate. It functions in the pathway cofactor biosynthesis; molybdopterin biosynthesis. Catalyzes the conversion of (8S)-3',8-cyclo-7,8-dihydroguanosine 5'-triphosphate to cyclic pyranopterin monophosphate (cPMP). This is Cyclic pyranopterin monophosphate synthase from Actinobacillus succinogenes (strain ATCC 55618 / DSM 22257 / CCUG 43843 / 130Z).